The following is a 245-amino-acid chain: 1-(5-phosphoribosyl)-5-[(5-phosphoribosylamino)methylideneamino] imidazole-4-carboxamide isomerase (245 aa).

D7 (proton acceptor) is an active-site residue. Catalysis depends on D129, which acts as the Proton donor.

Belongs to the HisA/HisF family.

The protein resides in the cytoplasm. The enzyme catalyses 1-(5-phospho-beta-D-ribosyl)-5-[(5-phospho-beta-D-ribosylamino)methylideneamino]imidazole-4-carboxamide = 5-[(5-phospho-1-deoxy-D-ribulos-1-ylimino)methylamino]-1-(5-phospho-beta-D-ribosyl)imidazole-4-carboxamide. It participates in amino-acid biosynthesis; L-histidine biosynthesis; L-histidine from 5-phospho-alpha-D-ribose 1-diphosphate: step 4/9. The polypeptide is 1-(5-phosphoribosyl)-5-[(5-phosphoribosylamino)methylideneamino] imidazole-4-carboxamide isomerase (Idiomarina loihiensis (strain ATCC BAA-735 / DSM 15497 / L2-TR)).